A 423-amino-acid polypeptide reads, in one-letter code: Maltoporin 1 (423 aa).

The first 24 residues, 1–24 (MITLRKLPIALAVAAGVLSTQAMA), serve as a signal peptide directing secretion.

This sequence belongs to the porin LamB (TC 1.B.3) family. Homotrimer formed of three 18-stranded antiparallel beta-barrels, containing three independent channels.

It is found in the cell outer membrane. The catalysed reaction is beta-maltose(in) = beta-maltose(out). Functionally, involved in the transport of maltose and maltodextrins. This Yersinia pestis bv. Antiqua (strain Antiqua) protein is Maltoporin 1.